We begin with the raw amino-acid sequence, 120 residues long: MQNISPKVQNQINMLQQMQQQMQTILSQKSQYELAAQEARRAVEELKETDDSAAVYMNVGTVVMQKPKSEVISKVTEKIETLEIRIRSIEKQEKMLQEKFEKLQSQVRSEIEGRKTPDAN.

The protein belongs to the prefoldin subunit beta family. Heterohexamer of two alpha and four beta subunits.

Its subcellular location is the cytoplasm. Molecular chaperone capable of stabilizing a range of proteins. Seems to fulfill an ATP-independent, HSP70-like function in archaeal de novo protein folding. This chain is Prefoldin subunit beta, found in Methanospirillum hungatei JF-1 (strain ATCC 27890 / DSM 864 / NBRC 100397 / JF-1).